Here is a 500-residue protein sequence, read N- to C-terminus: MSEVSEVRVRFCPSPTGTPHVGMVRTALFNWAYARHTGGKLVFRIEDTDAKRDSEESYQAIIDSLKWLNLGWDEGIEVGGPHEPYRQSQRMDIYADVLEKLKESGDVYPAYSTNEEVQARHKAAGRDPQLGYDNYDRDLTEEQIAQFKAEGREPVWRLRMPDNRIYEWHDLVRGDMSVDGKTVPDFVVARSNGQPLYTLVNPVDDALMEITHVLRGEDLLPSTPRQIALYEALVRVGVAKQVPTFGHLPFVMGEGNKKLSKRDPESNLFNHRDNGIIPEGMLNYLSLLGWSLSADEDIFTMQQLIDNFDVADVKPNPARFDQKKLEAINADHIRMLELGDFTERLRAYLEEYKGFPADYPADKFAFAAELVQTRIKTLSDADGLLRFLITSDADLSLDEKAARKNLKEDAVEVLEVAIAQLEAIADGEFKTDVIEKALQSKLIEEMELKPRKAYGALRVAISGAAVSPPLFESMELLGKESTLARLRAAREQTPFAPAQQ.

A 'HIGH' region motif is present at residues 13–23 (PSPTGTPHVGM). Residues 258-262 (KLSKR) carry the 'KMSKS' region motif. Lys261 provides a ligand contact to ATP.

It belongs to the class-I aminoacyl-tRNA synthetase family. Glutamate--tRNA ligase type 1 subfamily. Monomer.

The protein localises to the cytoplasm. It carries out the reaction tRNA(Glu) + L-glutamate + ATP = L-glutamyl-tRNA(Glu) + AMP + diphosphate. Catalyzes the attachment of glutamate to tRNA(Glu) in a two-step reaction: glutamate is first activated by ATP to form Glu-AMP and then transferred to the acceptor end of tRNA(Glu). This is Glutamate--tRNA ligase from Corynebacterium jeikeium (strain K411).